We begin with the raw amino-acid sequence, 416 residues long: Tryptophan synthase beta chain (416 aa).

An N6-(pyridoxal phosphate)lysine modification is found at Lys109.

The protein belongs to the TrpB family. In terms of assembly, tetramer of two alpha and two beta chains. Pyridoxal 5'-phosphate serves as cofactor.

It catalyses the reaction (1S,2R)-1-C-(indol-3-yl)glycerol 3-phosphate + L-serine = D-glyceraldehyde 3-phosphate + L-tryptophan + H2O. Its pathway is amino-acid biosynthesis; L-tryptophan biosynthesis; L-tryptophan from chorismate: step 5/5. Functionally, the beta subunit is responsible for the synthesis of L-tryptophan from indole and L-serine. The polypeptide is Tryptophan synthase beta chain (Prochlorococcus marinus (strain SARG / CCMP1375 / SS120)).